Here is a 339-residue protein sequence, read N- to C-terminus: Small ribosomal subunit biogenesis GTPase RsgA (339 aa).

The 161-residue stretch at 111-271 (MRGLLKPVAA…LIDSPGIREF (161 aa)) folds into the CP-type G domain. Residues 159-162 (NKAD) and 213-221 (GQSGVGKSS) each bind GTP. Residues Cys295, Cys300, His302, and Cys308 each coordinate Zn(2+).

This sequence belongs to the TRAFAC class YlqF/YawG GTPase family. RsgA subfamily. In terms of assembly, monomer. Associates with 30S ribosomal subunit, binds 16S rRNA. Zn(2+) is required as a cofactor.

It is found in the cytoplasm. Its function is as follows. One of several proteins that assist in the late maturation steps of the functional core of the 30S ribosomal subunit. Helps release RbfA from mature subunits. May play a role in the assembly of ribosomal proteins into the subunit. Circularly permuted GTPase that catalyzes slow GTP hydrolysis, GTPase activity is stimulated by the 30S ribosomal subunit. The sequence is that of Small ribosomal subunit biogenesis GTPase RsgA from Pseudomonas aeruginosa (strain LESB58).